Reading from the N-terminus, the 309-residue chain is Xylose/arabinose import permease protein XacI (309 aa).

The next 6 membrane-spanning stretches (helical) occupy residues 29–49 (LVVF…MTAI), 89–109 (LIMS…AAYG), 121–141 (MLML…VPLA), 170–190 (ELVP…TILF), 227–247 (MFGV…LFAF), and 282–302 (AAFL…EQFA). The region spanning 85 to 297 (FFNSLIMSIP…VPTLILYVAF (213 aa)) is the ABC transmembrane type-1 domain.

The protein belongs to the binding-protein-dependent transport system permease family. In terms of assembly, the complex is composed of two ATP-binding proteins (XacJ and XacK), two transmembrane proteins (XacH and XacI) and a solute-binding protein (XacG).

The protein localises to the cell membrane. Functionally, part of the ABC transporter complex XacGHIJK involved in the uptake of xylose and arabinose. Responsible for the translocation of the substrate across the membrane. The chain is Xylose/arabinose import permease protein XacI from Haloferax volcanii (strain ATCC 29605 / DSM 3757 / JCM 8879 / NBRC 14742 / NCIMB 2012 / VKM B-1768 / DS2) (Halobacterium volcanii).